Here is a 710-residue protein sequence, read N- to C-terminus: Elongation factor G (710 aa).

The 283-residue stretch at 8-290 (SQYRNIGISA…AIVEYLPSPM (283 aa)) folds into the tr-type G domain. Residues 17-24 (AHIDAGKT), 88-92 (DTPGH), and 142-145 (NKMD) each bind GTP.

This sequence belongs to the TRAFAC class translation factor GTPase superfamily. Classic translation factor GTPase family. EF-G/EF-2 subfamily.

The protein localises to the cytoplasm. Catalyzes the GTP-dependent ribosomal translocation step during translation elongation. During this step, the ribosome changes from the pre-translocational (PRE) to the post-translocational (POST) state as the newly formed A-site-bound peptidyl-tRNA and P-site-bound deacylated tRNA move to the P and E sites, respectively. Catalyzes the coordinated movement of the two tRNA molecules, the mRNA and conformational changes in the ribosome. The protein is Elongation factor G of Buchnera aphidicola subsp. Baizongia pistaciae (strain Bp).